Here is a 237-residue protein sequence, read N- to C-terminus: Ribosomal RNA small subunit methyltransferase G (237 aa).

S-adenosyl-L-methionine is bound by residues Gly-75, Phe-80, 127–128 (AE), and Arg-146.

This sequence belongs to the methyltransferase superfamily. RNA methyltransferase RsmG family.

It is found in the cytoplasm. Specifically methylates the N7 position of a guanine in 16S rRNA. The sequence is that of Ribosomal RNA small subunit methyltransferase G from Synechococcus sp. (strain RCC307).